Consider the following 805-residue polypeptide: ATP-dependent RNA helicase mak-5 (805 aa).

Residues 1–10 (MAVDKKRKNT) show a composition bias toward basic residues. Disordered regions lie at residues 1–33 (MAVD…KRPV) and 79–189 (VPKS…ELET). Residues 85-100 (EVEDDGEEFGGFDDEE) show a composition bias toward acidic residues. 3 stretches are compositionally biased toward basic and acidic residues: residues 110-119 (QEVKTSETKA), 126-143 (AKEK…EQQK), and 164-189 (KNAE…ELET). The Q motif motif lies at 209–237 (SEWVPLDLSPRMISSIAKLRFSKPTVIQS). The 224-residue stretch at 240–463 (IPEIMAGHDV…AGKSKFKATS (224 aa)) folds into the Helicase ATP-binding domain. Residue 253 to 260 (ASTGSGKT) coordinates ATP. A DEAD box motif is present at residues 372–375 (DEAD). A compositionally biased stretch (basic and acidic residues) spans 390–406 (FKALDRPPVEENNEDQK). The segment at 390-435 (FKALDRPPVEENNEDQKMGGTDEEGQEEEEEDSEEEEEEEEEHVNK) is disordered. Over residues 410 to 431 (TDEEGQEEEEEDSEEEEEEEEE) the composition is skewed to acidic residues. A Helicase C-terminal domain is found at 510 to 666 (YLYATLMLQP…NSGNNTKKLV (157 aa)). Residues 729–751 (AGKWGGKGSSKKQKQKEAQQMSK) form a disordered region.

Belongs to the DEAD box helicase family. DDX24/MAK5 subfamily.

It is found in the nucleus. It localises to the nucleolus. The enzyme catalyses ATP + H2O = ADP + phosphate + H(+). In terms of biological role, ATP-binding RNA helicase involved in the biogenesis of 60S ribosomal subunits and is required for the normal formation of 25S and 5.8S rRNAs. The protein is ATP-dependent RNA helicase mak-5 (mak-5) of Neurospora crassa (strain ATCC 24698 / 74-OR23-1A / CBS 708.71 / DSM 1257 / FGSC 987).